The primary structure comprises 757 residues: Polyribonucleotide nucleotidyltransferase (757 aa).

2 residues coordinate Mg(2+): aspartate 482 and aspartate 488. Positions 549 to 608 constitute a KH domain; it reads PRMLSFYIDKDKISAAIGSKGKNIRSVCERSNAKIEIGDDGKVSVFATSGTEAEIAKSMM. In terms of domain architecture, S1 motif spans 618-686; that stretch reads GSIVDVKVVR…KGGCPKLSRR (69 aa). The span at 703-714 shows a compositional bias: basic and acidic residues; that stretch reads EERKDGPNDRDN. Residues 703–757 are disordered; sequence EERKDGPNDRDNYYNNSFSRKPGGSHHKRPPRPRSGFSNRNRPKFGNNDSSSGFY. The segment covering 725 to 734 has biased composition (basic residues); it reads GGSHHKRPPR.

It belongs to the polyribonucleotide nucleotidyltransferase family. It depends on Mg(2+) as a cofactor.

It is found in the cytoplasm. The catalysed reaction is RNA(n+1) + phosphate = RNA(n) + a ribonucleoside 5'-diphosphate. Involved in mRNA degradation. Catalyzes the phosphorolysis of single-stranded polyribonucleotides processively in the 3'- to 5'-direction. This is Polyribonucleotide nucleotidyltransferase from Wolbachia sp. subsp. Drosophila simulans (strain wRi).